Reading from the N-terminus, the 146-residue chain is uncharacterized protein (146 aa).

The N-terminal stretch at M1 to A17 is a signal peptide. 2 disordered regions span residues N27–L54 and E70–P146. Over residues Q32 to L54 the composition is skewed to low complexity. Residues S77–H118 are compositionally biased toward polar residues.

This is an uncharacterized protein from Escherichia coli (strain K12).